The chain runs to 332 residues: Malate dehydrogenase, cytoplasmic (332 aa).

Residues 16–17, Asp43, and Gly90 contribute to the NAD(+) site; that span reads QI. An oxaloacetate-binding site is contributed by Arg99. Gln113 and Asn132 together coordinate NAD(+). 4 residues coordinate oxaloacetate: Asn132, Arg163, His188, and Ser243. His188 functions as the Proton acceptor in the catalytic mechanism.

This sequence belongs to the LDH/MDH superfamily. MDH type 2 family. In terms of assembly, homodimer.

The protein localises to the cytoplasm. It catalyses the reaction (S)-malate + NAD(+) = oxaloacetate + NADH + H(+). The chain is Malate dehydrogenase, cytoplasmic (CMDH) from Medicago sativa (Alfalfa).